The sequence spans 278 residues: Ankyrin repeat and SOCS box protein 13 (278 aa).

ANK repeat units lie at residues 18–47, 51–80, 84–113, 116–145, 149–178, and 181–210; these read VERT…CVNQ, DSIT…QVDA, DGST…KVNP, YTAS…NLEA, HFGT…NVNA, and LHET…NIYA. In terms of domain architecture, SOCS box spans 229 to 278; the sequence is AKCFEYYEKTPLSLSQLCRVSLRKATGVRGLEKVAKLNIPPRLIDYLSYN.

Belongs to the ankyrin SOCS box (ASB) family.

It participates in protein modification; protein ubiquitination. May be a substrate-recognition component of a SCF-like ECS (Elongin-Cullin-SOCS-box protein) E3 ubiquitin-protein ligase complex which mediates the ubiquitination and subsequent proteasomal degradation of target proteins. In Mus musculus (Mouse), this protein is Ankyrin repeat and SOCS box protein 13 (Asb13).